The following is a 599-amino-acid chain: Elongation factor 4 (599 aa).

Positions 2–184 (KNIRNFSIIA…RLVRDIPPPQ (183 aa)) constitute a tr-type G domain. GTP is bound by residues 14–19 (DHGKST) and 131–134 (NKID).

Belongs to the TRAFAC class translation factor GTPase superfamily. Classic translation factor GTPase family. LepA subfamily.

It is found in the cell inner membrane. The catalysed reaction is GTP + H2O = GDP + phosphate + H(+). Required for accurate and efficient protein synthesis under certain stress conditions. May act as a fidelity factor of the translation reaction, by catalyzing a one-codon backward translocation of tRNAs on improperly translocated ribosomes. Back-translocation proceeds from a post-translocation (POST) complex to a pre-translocation (PRE) complex, thus giving elongation factor G a second chance to translocate the tRNAs correctly. Binds to ribosomes in a GTP-dependent manner. This is Elongation factor 4 from Salmonella agona (strain SL483).